Consider the following 226-residue polypeptide: Lipoprotein-releasing system ATP-binding protein LolD (226 aa).

The ABC transporter domain occupies 6 to 226; it reads VLISGLTKTF…KLYKGNLEEV (221 aa). 42 to 49 is a binding site for ATP; sequence GESGSGKS.

This sequence belongs to the ABC transporter superfamily. Lipoprotein translocase (TC 3.A.1.125) family. As to quaternary structure, the complex is composed of two ATP-binding proteins (LolD) and two transmembrane proteins (LolC and LolE).

Its subcellular location is the cell inner membrane. In terms of biological role, part of the ABC transporter complex LolCDE involved in the translocation of mature outer membrane-directed lipoproteins, from the inner membrane to the periplasmic chaperone, LolA. Responsible for the formation of the LolA-lipoprotein complex in an ATP-dependent manner. In Treponema denticola (strain ATCC 35405 / DSM 14222 / CIP 103919 / JCM 8153 / KCTC 15104), this protein is Lipoprotein-releasing system ATP-binding protein LolD.